Reading from the N-terminus, the 293-residue chain is Short-chain dehydrogenase/reductase PhomF (293 aa).

2 residues coordinate NADP(+): Ile31 and Asn102. The Proton donor role is filled by Ser175. Residues Tyr190, Lys194, and Ser225 each contribute to the NADP(+) site. Tyr190 acts as the Proton acceptor in catalysis. The active-site Lowers pKa of active site Tyr is the Lys194.

Belongs to the short-chain dehydrogenases/reductases (SDR) family.

Short-chain dehydrogenase/reductase; part of the gene cluster that mediates the biosynthesis of the phomopsins, a group of hexapeptide mycotoxins which infects lupins and causes lupinosis disease in livestock. The role of phomF within the phomopsins biosynthesis pathway has still to be determined. The pathway starts with the processing of the precursor phomA by several endopeptidases including kexin proteases as well as the cluster-specific S41 family peptidase phomP1 and the oligopeptidase phomG to produce 10 identical copies of the hexapeptide Tyr-Val-Ile-Pro-Ile-Asp. After being excised from the precursor peptide, the core peptides are cyclized and modified post-translationally by enzymes encoded within the gene cluster. The timing and order of proteolysis of the phomA precursor and PTMs are still unknown. Two tyrosinase-like enzymes, phomQ1 and phomQ2, catalyze the chlorination and hydroxylation of Tyr, respectively. PhomYb, is proposed to be involved in the construction of the macrocyclic structure. The other 4 ustYa family proteins may be involved in PTMs that generate the unique structure of phomopsin A. PhomYa is required for the hydroxylation of C-beta of Tyr. PhomYc, phomYd, and phomYe are responsible for the biosynthesis of 2,3-dehydroisoleucine (dIle), 2,3-dehydroaspartic acid (dAsp), and 3,4-dehydroproline (dPro), respectively. While dIle formation by phomYc is indispensable for the installation of dAsp by phomYd, the order of the other PTMs have not been elucidated yet. Most of the biosynthetic enzymes likely have broad substrate specificity, and thus, there might be a metabolic grid from a precursor to phomopsin A. The enzyme(s) responsible for the biosynthesis of 3,4-dehydrovaline (dVal) have also not been identified yet. Finally, phomM acts as an S-adenosylmethionine-dependent alpha-N-methyltransferase that catalyzes two successive N-methylation reactions, converting N-desmethyl-phomopsin A to phomopsin A and phomopsin A further to an N,N-dimethylated congener called phomopsin E. The polypeptide is Short-chain dehydrogenase/reductase PhomF (Diaporthe leptostromiformis (Lupinosis disease fungus)).